A 113-amino-acid chain; its full sequence is Pancreatic progenitor cell differentiation and proliferation factor A (113 aa).

The protein belongs to the PPDPF family.

In terms of biological role, probable regulator of exocrine pancreas development. The polypeptide is Pancreatic progenitor cell differentiation and proliferation factor A (ppdpf-a) (Xenopus laevis (African clawed frog)).